We begin with the raw amino-acid sequence, 394 residues long: Elongation factor Tu-A (394 aa).

The region spanning Lys-10–Glu-204 is the tr-type G domain. The G1 stretch occupies residues Gly-19 to Thr-26. Residue Gly-19–Thr-26 coordinates GTP. Thr-26 is a Mg(2+) binding site. The G2 stretch occupies residues Gly-60–Asn-64. Residues Asp-81–Gly-84 are G3. Residues Asp-81 to His-85 and Asn-136 to Asp-139 each bind GTP. Residues Asn-136–Asp-139 form a G4 region. The interval Ser-174–Leu-176 is G5.

Belongs to the TRAFAC class translation factor GTPase superfamily. Classic translation factor GTPase family. EF-Tu/EF-1A subfamily. Monomer.

It is found in the cytoplasm. It catalyses the reaction GTP + H2O = GDP + phosphate + H(+). In terms of biological role, GTP hydrolase that promotes the GTP-dependent binding of aminoacyl-tRNA to the A-site of ribosomes during protein biosynthesis. The protein is Elongation factor Tu-A of Vibrio cholerae serotype O1 (strain ATCC 39315 / El Tor Inaba N16961).